The sequence spans 491 residues: Probable glycine dehydrogenase (decarboxylating) subunit 2 (491 aa).

Lysine 264 carries the post-translational modification N6-(pyridoxal phosphate)lysine.

It belongs to the GcvP family. C-terminal subunit subfamily. The glycine cleavage system is composed of four proteins: P, T, L and H. In this organism, the P 'protein' is a heterodimer of two subunits. Pyridoxal 5'-phosphate is required as a cofactor.

The enzyme catalyses N(6)-[(R)-lipoyl]-L-lysyl-[glycine-cleavage complex H protein] + glycine + H(+) = N(6)-[(R)-S(8)-aminomethyldihydrolipoyl]-L-lysyl-[glycine-cleavage complex H protein] + CO2. Its function is as follows. The glycine cleavage system catalyzes the degradation of glycine. The P protein binds the alpha-amino group of glycine through its pyridoxal phosphate cofactor; CO(2) is released and the remaining methylamine moiety is then transferred to the lipoamide cofactor of the H protein. The polypeptide is Probable glycine dehydrogenase (decarboxylating) subunit 2 (Coxiella burnetii (strain CbuK_Q154) (Coxiella burnetii (strain Q154))).